The chain runs to 510 residues: ATP synthase subunit alpha (510 aa).

169–176 (GDRQTGKT) is an ATP binding site.

Belongs to the ATPase alpha/beta chains family. F-type ATPases have 2 components, CF(1) - the catalytic core - and CF(0) - the membrane proton channel. CF(1) has five subunits: alpha(3), beta(3), gamma(1), delta(1), epsilon(1). CF(0) has three main subunits: a(1), b(2) and c(9-12). The alpha and beta chains form an alternating ring which encloses part of the gamma chain. CF(1) is attached to CF(0) by a central stalk formed by the gamma and epsilon chains, while a peripheral stalk is formed by the delta and b chains.

The protein localises to the cell membrane. It catalyses the reaction ATP + H2O + 4 H(+)(in) = ADP + phosphate + 5 H(+)(out). Its function is as follows. Produces ATP from ADP in the presence of a proton gradient across the membrane. The alpha chain is a regulatory subunit. In Thermomicrobium roseum (strain ATCC 27502 / DSM 5159 / P-2), this protein is ATP synthase subunit alpha.